We begin with the raw amino-acid sequence, 512 residues long: MKKIQFFDTTLRDGEQTPGVNFDVKEKIQIALQLEKLGIDVIEAGFPISSPGDFECVKAIAKAIKHCSVTGLARCVEGDIDRAEEALKDAVSPQIHIFLATSDVHMEYKLKMSRAEVLASIKHHISYARQKFEVVQFSPEDATRSDRAFLIEAVQTAIDAGATVINIPDTVGYTNPTEFGQLFQDLRREIKQFDDIIFASHCHDDLGMATANALAAIENGARRVEGTINGIGERAGNTALEEVAVALHIRKDFYQAETNIVLNQFKNSSDLISRLSGMPVPRNKAVIGGNAYAHESGIHQDGVLKNPDTYEIITPALVGVDKNSLPLGKLSGKHAFQTRMEEMGYNLSEQELKDAFKRFKQLADAKKEVTEDDLHALILGQSSESADDFELKHLQVQYVTGGVQGAIVRIAERDGTLIEDAATGSGSIEAIYNTINRLMKQNIELTNYHIQAITAGQDAQAEVHVVIKDKSGAEFHGIGIDFDVLTASAKAYLQASAKSKTGSKQADFEEVK.

The region spanning 4 to 266 is the Pyruvate carboxyltransferase domain; that stretch reads IQFFDTTLRD…ETNIVLNQFK (263 aa). Mn(2+) is bound by residues D13, H201, H203, and N237. The segment at 390–512 is regulatory domain; that stretch reads ELKHLQVQYV…SKQADFEEVK (123 aa).

It belongs to the alpha-IPM synthase/homocitrate synthase family. LeuA type 1 subfamily. In terms of assembly, homodimer. Requires Mn(2+) as cofactor.

It is found in the cytoplasm. It catalyses the reaction 3-methyl-2-oxobutanoate + acetyl-CoA + H2O = (2S)-2-isopropylmalate + CoA + H(+). It participates in amino-acid biosynthesis; L-leucine biosynthesis; L-leucine from 3-methyl-2-oxobutanoate: step 1/4. Its function is as follows. Catalyzes the condensation of the acetyl group of acetyl-CoA with 3-methyl-2-oxobutanoate (2-ketoisovalerate) to form 3-carboxy-3-hydroxy-4-methylpentanoate (2-isopropylmalate). This Listeria monocytogenes serotype 4a (strain HCC23) protein is 2-isopropylmalate synthase.